The chain runs to 204 residues: Large ribosomal subunit protein uL4 (204 aa).

The segment at 49-75 (TKGRSDVSGGGKKPWRQKGRGGARAGS) is disordered.

It belongs to the universal ribosomal protein uL4 family. In terms of assembly, part of the 50S ribosomal subunit.

Its function is as follows. One of the primary rRNA binding proteins, this protein initially binds near the 5'-end of the 23S rRNA. It is important during the early stages of 50S assembly. It makes multiple contacts with different domains of the 23S rRNA in the assembled 50S subunit and ribosome. Functionally, forms part of the polypeptide exit tunnel. In Campylobacter jejuni subsp. jejuni serotype O:23/36 (strain 81-176), this protein is Large ribosomal subunit protein uL4.